A 465-amino-acid polypeptide reads, in one-letter code: ATP synthase subunit beta (465 aa).

Residue 155–162 coordinates ATP; it reads GGAGVGKT.

This sequence belongs to the ATPase alpha/beta chains family. In terms of assembly, F-type ATPases have 2 components, CF(1) - the catalytic core - and CF(0) - the membrane proton channel. CF(1) has five subunits: alpha(3), beta(3), gamma(1), delta(1), epsilon(1). CF(0) has three main subunits: a(1), b(2) and c(9-12). The alpha and beta chains form an alternating ring which encloses part of the gamma chain. CF(1) is attached to CF(0) by a central stalk formed by the gamma and epsilon chains, while a peripheral stalk is formed by the delta and b chains.

It localises to the cell membrane. The enzyme catalyses ATP + H2O + 4 H(+)(in) = ADP + phosphate + 5 H(+)(out). Produces ATP from ADP in the presence of a proton gradient across the membrane. The catalytic sites are hosted primarily by the beta subunits. This chain is ATP synthase subunit beta, found in Buchnera aphidicola subsp. Baizongia pistaciae (strain Bp).